Consider the following 197-residue polypeptide: uncharacterized protein (197 aa).

The first 23 residues, M1–A23, serve as a signal peptide directing secretion. N19 and N26 each carry an N-linked (GlcNAc...) asparagine glycan. Residues S24 to T61 lie on the Extracellular side of the membrane. A helical membrane pass occupies residues L62 to F82. Topologically, residues H83 to S197 are cytoplasmic. Residues M94 to S180 are disordered. 2 stretches are compositionally biased toward basic and acidic residues: residues R96–S107 and H125–R136. The segment covering S147 to P161 has biased composition (low complexity). Residues C162–S171 show a composition bias toward pro residues.

The protein localises to the membrane. This is an uncharacterized protein from Macaca fascicularis (Crab-eating macaque).